Here is a 417-residue protein sequence, read N- to C-terminus: Peptidyl-Asp metalloendopeptidase (417 aa).

The N-terminal stretch at 1–25 (MLSRSIGKAAGGLVLGLSVAAAAHA) is a signal peptide. His-327 contributes to the Zn(2+) binding site. Glu-328 is an active-site residue. Zn(2+) is bound by residues His-331 and His-337.

This sequence belongs to the peptidase M72 family. It depends on Zn(2+) as a cofactor.

The catalysed reaction is Cleavage of Xaa-|-Asp, Xaa-|-Glu and Xaa-|-cysteic acid bonds.. Its function is as follows. Metalloprotease, specifically cleaves on the N-terminal side of aspartyl, glutamyl and cysteic acid residues. The protein is Peptidyl-Asp metalloendopeptidase of Stenotrophomonas maltophilia (strain K279a).